The chain runs to 456 residues: MFS-type transporter ppzB (456 aa).

A run of 5 helical transmembrane segments spans residues 1–21 (MGLF…PFIM), 38–58 (GFLA…GWAA), 72–92 (VFLF…LLVV), 125–145 (IGTI…LGGV), and 154–174 (AVFA…GLVI). Positions 206–225 (EAQERTHEGTPLLPQDDDDD) are disordered. 6 helical membrane passes run 255 to 275 (LAML…ATVP), 284 to 304 (FSSL…FALG), 318 to 338 (AAAT…GLPE), 348 to 368 (VALF…VTSP), 398 to 418 (FGFS…LGGV), and 427 to 447 (VMGA…FLFV).

The protein belongs to the major facilitator superfamily. TCR/Tet family.

The protein localises to the membrane. MFS-type transporter; part of the gene cluster that mediates the biosynthesis of pyrrolopyrazines, secondary metabolites showing insecticidal activity. Probably involved in the secretion of peramine and other pyrrolopyrazines. The protein is MFS-type transporter ppzB (ppzB) of Metarhizium majus (strain ARSEF 297).